The primary structure comprises 139 residues: Putative pre-16S rRNA nuclease (139 aa).

The protein belongs to the YqgF nuclease family.

It localises to the cytoplasm. In terms of biological role, could be a nuclease involved in processing of the 5'-end of pre-16S rRNA. The sequence is that of Putative pre-16S rRNA nuclease from Legionella pneumophila subsp. pneumophila (strain Philadelphia 1 / ATCC 33152 / DSM 7513).